The sequence spans 670 residues: Probable Na(+)/H(+) antiporter nhx-3 (670 aa).

Transmembrane regions (helical) follow at residues 41 to 61 (VYVI…FNLM), 73 to 93 (LLII…LSGV), 97 to 117 (SHAF…YFMP), 129 to 149 (LVFS…SLLI), 164 to 184 (EILV…IAIF), 192 to 212 (FLFI…VVLY), 235 to 255 (GLSF…FAIA), and 268 to 288 (ILAP…AEMV). N-linked (GlcNAc...) asparagine glycosylation occurs at N310. 4 consecutive transmembrane segments (helical) span residues 325–345 (MLAQ…TLTS), 351–371 (FIFI…GIIV), 390–410 (FILS…VSIP), and 418–438 (MFIT…GITI). Residues 648-670 (GDLKGHCGTSRKPKHSMFELRHV) form a disordered region.

It belongs to the monovalent cation:proton antiporter 1 (CPA1) transporter (TC 2.A.36) family. Post-translationally, phosphorylated. In terms of tissue distribution, expressed in hypodermal cells of the main body syncytium, ut1 cells of the vulva and the spermathecal junction cell.

It localises to the endomembrane system. Its function is as follows. Plays a role in epithelial membrane transport processes. In Caenorhabditis elegans, this protein is Probable Na(+)/H(+) antiporter nhx-3 (nhx-3).